Here is a 164-residue protein sequence, read N- to C-terminus: Thiol peroxidase (164 aa).

The Thioredoxin domain occupies 18-163 (INEGDFAPDF…FDAALAAYKN (146 aa)). The Cysteine sulfenic acid (-SOH) intermediate role is filled by Cys60. A disulfide bridge connects residues Cys60 and Cys93.

It belongs to the peroxiredoxin family. Tpx subfamily. In terms of assembly, homodimer.

It catalyses the reaction a hydroperoxide + [thioredoxin]-dithiol = an alcohol + [thioredoxin]-disulfide + H2O. Thiol-specific peroxidase that catalyzes the reduction of hydrogen peroxide and organic hydroperoxides to water and alcohols, respectively. Plays a role in cell protection against oxidative stress by detoxifying peroxides. This Staphylococcus aureus (strain Mu50 / ATCC 700699) protein is Thiol peroxidase.